Here is a 112-residue protein sequence, read N- to C-terminus: Secretoglobin family 2B member 20 (112 aa).

A signal peptide spans 1-23; that stretch reads MKGTLLLLGLLVTGELSFQTTEA. N-linked (GlcNAc...) asparagine glycosylation is present at N50.

This sequence belongs to the secretoglobin family. In terms of tissue distribution, expressed in lacrimal gland, at higher level in males than females. Expressed in the submandibular gland.

The protein resides in the secreted. The chain is Secretoglobin family 2B member 20 (Scgb2b20) from Mus musculus (Mouse).